The primary structure comprises 780 residues: Cullin-5 (780 aa).

At Ser34 the chain carries Phosphoserine. A Phosphothreonine modification is found at Thr210. The 60-residue stretch at 713-772 (LRTRKLYIQIMKMRKKISNAQLQTELVEILKNMFLPQKKMIKEQIEWLIEHKYIRRDESD) folds into the Cullin neddylation domain. Lys724 participates in a covalent cross-link: Glycyl lysine isopeptide (Lys-Gly) (interchain with G-Cter in NEDD8).

Belongs to the cullin family. In terms of assembly, component of multiple cullin-5-RING E3 ubiquitin-protein ligase complexes (ECS complexes, also named CRL5 complexes) formed of CUL5, Elongin BC (ELOB and ELOC), RNF7/RBX2 and a variable SOCS box domain-containing protein as substrate-specific recognition component. CUL5-containing ECS complexes specifically contain RNF7/RBX2, and not RBX1, as catalytic subunit. Component of the ECS(ASB2) complex with the substrate recognition component ASB2. Component of the ECS(ASB6) complex with the substrate recognition component ASB6. Component of the ECS(ASB7) complex with the substrate recognition component ASB7. Component of the ECS(ASB9) complex with the substrate recognition component ASB9. Component of the ECS(ASB11) complex with the substrate recognition component ASB11. Component of the ECS(ASB12) complex with the substrate recognition component ASB12. Component of the ECS(LRRC41) complex with the substrate recognition component LRRC41. Component of the ECS(SOCS1) complex with the substrate recognition component SOCS1. Component of the ECS(SOCS2) complex with the substrate recognition component SOCS2. Component of the ECS(WSB1) complex with the substrate recognition subunit WSB1. Component of the ECS(SOCS3) complex with the substrate recognition component SOCS3. Component of the ECS(SOCS7) complex with the substrate recognition component SOCS7. Component of the ECS(SPSB1) complex with the substrate recognition component SPSB1. Component of the ECS(SPSB3) complex with the substrate recognition component SPSB3. Component of the ECS(SPSB2) complex with the substrate recognition component SPSB2. Component of the ECS(SPSB4) complex with the substrate recognition component SPSB4. Component of the ECS(RAB40) complex with the substrate recognition subunit RAB40A, RAB40B or RAB40C. Component of the ECS(KLHDC1) complex with the substrate recognition component KLHDC1. Component of the ECS(PCMTD1) complex with the substrate recognition subunit PCMTD1. May also form complexes containing RBX1 and ELOA or VHL; additional evidence is however required to confirm this result in vivo. Interacts (when neddylated) with ARIH2; leading to activate the E3 ligase activity of ARIH2. Interacts with ERCC6; the interaction is induced by DNA damaging agents or inhibitors of RNA polymerase II elongation. Interacts with ELOA (via the BC-box). Interacts (unneddylated form) with DCUN1D1, DCUN1D2, DCUN1D3, DCUN1D4 and DCUN1D5; these interactions promote the cullin neddylation. Neddylated; which enhances the ubiquitination activity of ECS complexes and prevents binding of the inhibitor CAND1. Deneddylated via its interaction with the COP9 signalosome (CSN). In terms of tissue distribution, kidney collecting tubules.

The protein resides in the nucleus. It participates in protein modification; protein ubiquitination. Core component of multiple cullin-5-RING E3 ubiquitin-protein ligase complexes (ECS complexes, also named CRL5 complexes), which mediate the ubiquitination and subsequent proteasomal degradation of target proteins. Acts a scaffold protein that contributes to catalysis through positioning of the substrate and the ubiquitin-conjugating enzyme. The functional specificity of the E3 ubiquitin-protein ligase complex depends on the variable SOCS box-containing substrate recognition component. Acts as a key regulator of neuron positioning during cortex development: component of various SOCS-containing ECS complexes, such as the ECS(SOCS7) complex, that regulate reelin signaling by mediating ubiquitination and degradation of DAB1. ECS(SOCS1) seems to direct ubiquitination of JAK2. The ECS(SOCS2) complex mediates the ubiquitination and subsequent proteasomal degradation of phosphorylated EPOR and GHR. The ECS(SPSB3) complex catalyzes ubiquitination of nuclear CGAS. ECS(KLHDC1) complex is part of the DesCEND (destruction via C-end degrons) pathway and mediates ubiquitination and degradation of truncated SELENOS selenoprotein produced by failed UGA/Sec decoding, which ends with a glycine. The ECS(ASB9) complex mediates ubiquitination and degradation of CKB. As part of some ECS complex, promotes 'Lys-11'-linked ubiquitination and degradation of BTRC. As part of a multisubunit ECS complex, polyubiquitinates monoubiquitinated POLR2A. As part of the ECS(RAB40C) complex, mediates ANKRD28 ubiquitination and degradation, thereby regulating protein phosphatase 6 (PP6) complex activity and focal adhesion assembly during cell migration. As part of the ECS(RAB40A) complex, mediates RHOU 'Lys-48'-linked ubiquitination and degradation, thus inhibiting focal adhesion disassembly during cell migration. As part of the ECS(RAB40B) complex, mediates LIMA1/EPLIN and RAP2 ubiquitination, thereby regulating actin cytoskeleton dynamics and stress fiber formation during cell migration. May form a cell surface vasopressin receptor. This chain is Cullin-5 (CUL5), found in Oryctolagus cuniculus (Rabbit).